Here is a 573-residue protein sequence, read N- to C-terminus: Proline--tRNA ligase (573 aa).

Belongs to the class-II aminoacyl-tRNA synthetase family. ProS type 1 subfamily. Homodimer.

Its subcellular location is the cytoplasm. The enzyme catalyses tRNA(Pro) + L-proline + ATP = L-prolyl-tRNA(Pro) + AMP + diphosphate. Catalyzes the attachment of proline to tRNA(Pro) in a two-step reaction: proline is first activated by ATP to form Pro-AMP and then transferred to the acceptor end of tRNA(Pro). As ProRS can inadvertently accommodate and process non-cognate amino acids such as alanine and cysteine, to avoid such errors it has two additional distinct editing activities against alanine. One activity is designated as 'pretransfer' editing and involves the tRNA(Pro)-independent hydrolysis of activated Ala-AMP. The other activity is designated 'posttransfer' editing and involves deacylation of mischarged Ala-tRNA(Pro). The misacylated Cys-tRNA(Pro) is not edited by ProRS. In Moorella thermoacetica (strain ATCC 39073 / JCM 9320), this protein is Proline--tRNA ligase.